The following is a 436-amino-acid chain: UDP-N-acetylmuramate--L-alanine ligase (436 aa).

111–117 (GTHGKTS) is a binding site for ATP.

This sequence belongs to the MurCDEF family.

The protein resides in the cytoplasm. It carries out the reaction UDP-N-acetyl-alpha-D-muramate + L-alanine + ATP = UDP-N-acetyl-alpha-D-muramoyl-L-alanine + ADP + phosphate + H(+). It functions in the pathway cell wall biogenesis; peptidoglycan biosynthesis. In terms of biological role, cell wall formation. This is UDP-N-acetylmuramate--L-alanine ligase from Pediococcus pentosaceus (strain ATCC 25745 / CCUG 21536 / LMG 10740 / 183-1w).